A 100-amino-acid chain; its full sequence is MTERFTGRLADVIRRPLITEKATRALELNQYTFEVDHRAAKPDIKAAVEQLFDVKVTGISTMNPPRRSRRVGRFAGKRAQVKKAVVRLAEGSSIQLFPES.

This sequence belongs to the universal ribosomal protein uL23 family. In terms of assembly, part of the 50S ribosomal subunit. Contacts protein L29, and trigger factor when it is bound to the ribosome.

Its function is as follows. One of the early assembly proteins it binds 23S rRNA. One of the proteins that surrounds the polypeptide exit tunnel on the outside of the ribosome. Forms the main docking site for trigger factor binding to the ribosome. The protein is Large ribosomal subunit protein uL23 of Synechococcus sp. (strain WH7803).